The chain runs to 638 residues: Chaperone protein DnaK (638 aa).

The residue at position 200 (T200) is a Phosphothreonine; by autocatalysis. The tract at residues 599–623 (LHMAATAEQQSASTGAGAGSSAKVD) is disordered. Positions 609 to 620 (SASTGAGAGSSA) are enriched in low complexity.

This sequence belongs to the heat shock protein 70 family.

Its function is as follows. Acts as a chaperone. The polypeptide is Chaperone protein DnaK (Xylella fastidiosa (strain M12)).